The following is a 420-amino-acid chain: Glucose-1-phosphate adenylyltransferase 2 (420 aa).

Alpha-D-glucose 1-phosphate-binding positions include Tyr109, Gly175, 190 to 191 (EK), and Ser208.

It belongs to the bacterial/plant glucose-1-phosphate adenylyltransferase family. Homotetramer.

The enzyme catalyses alpha-D-glucose 1-phosphate + ATP + H(+) = ADP-alpha-D-glucose + diphosphate. It participates in glycan biosynthesis; glycogen biosynthesis. Functionally, involved in the biosynthesis of ADP-glucose, a building block required for the elongation reactions to produce glycogen. Catalyzes the reaction between ATP and alpha-D-glucose 1-phosphate (G1P) to produce pyrophosphate and ADP-Glc. This chain is Glucose-1-phosphate adenylyltransferase 2, found in Pseudoalteromonas atlantica (strain T6c / ATCC BAA-1087).